Consider the following 614-residue polypeptide: Probable NOT transcription complex subunit VIP2 (614 aa).

Disordered stretches follow at residues 1–46 (MSNL…NLQG), 58–89 (NMQGTLTSRNSSMNSIPSAGVQQPNGSFSSGR), and 361–391 (NLGATYSSHRPQQQPQHTSSTGGLQGLGLRP). A compositionally biased stretch (polar residues) spans 364–381 (ATYSSHRPQQQPQHTSST).

This sequence belongs to the CNOT2/3/5 family. In terms of assembly, interacts with Agrobacterium tumefaciens VirE2. Binds to VIP1. Forms a complex made of Agrobacterium VirE2, VIP1, VIP2 and single-stranded DNA (ssDNA).

Its subcellular location is the nucleus. In terms of biological role, transcriptional regulator required for Agrobacterium-mediated stable genetic transformation by T-DNA integration in host genome, but not for T-DNA transient expression. This chain is Probable NOT transcription complex subunit VIP2 (VIP2), found in Arabidopsis thaliana (Mouse-ear cress).